The chain runs to 130 residues: Ribonuclease pancreatic (130 aa).

The first 6 residues, 1–6 (VQPSLG), serve as a signal peptide directing secretion. Substrate contacts are provided by K13 and R16. The active-site Proton acceptor is the H18. Cystine bridges form between C32-C90, C46-C101, C64-C116, and C71-C78. The N-linked (GlcNAc...) asparagine glycan is linked to N40. Substrate is bound by residues 47-51 (KPVNT), K72, and R91. H125 (proton donor) is an active-site residue.

This sequence belongs to the pancreatic ribonuclease family. In terms of assembly, monomer. Interacts with and forms tight 1:1 complexes with RNH1. Dimerization of two such complexes may occur. Interaction with RNH1 inhibits this protein. In terms of tissue distribution, pancreas.

It is found in the secreted. It carries out the reaction an [RNA] containing cytidine + H2O = an [RNA]-3'-cytidine-3'-phosphate + a 5'-hydroxy-ribonucleotide-3'-[RNA].. It catalyses the reaction an [RNA] containing uridine + H2O = an [RNA]-3'-uridine-3'-phosphate + a 5'-hydroxy-ribonucleotide-3'-[RNA].. Functionally, endonuclease that catalyzes the cleavage of RNA on the 3' side of pyrimidine nucleotides. Acts on single-stranded and double-stranded RNA. In Cricetulus griseus (Chinese hamster), this protein is Ribonuclease pancreatic (RNASE1).